The following is a 430-amino-acid chain: Type 3 secretion system ATPase (430 aa).

162 to 167 (GCGKTF) is a binding site for ATP.

The protein belongs to the ATPase alpha/beta chains family. T3SS ATPase subfamily. The core secretion machinery of the T3SS is composed of approximately 20 different proteins, including cytoplasmic components, a base, an export apparatus and a needle. This subunit is part of the cytosolic complex. Forms homohexamers. Interacts directly with MxiN/SctL (stator protein) and Spa13/SctO (stalk protein). Can form a soluble complex with Spa33/SctQ, MxiN/SctL and MxiK/SctK.

Its subcellular location is the cytoplasm. The enzyme catalyses ATP + H2O + cellular proteinSide 1 = ADP + phosphate + cellular proteinSide 2.. With respect to regulation, oligomerization increases ATPase activity. Monomeric forms exhibit low-level ATPase activity by forming short-lived oligomers with active site contributions from at least two protomers. In contrast, oligomers exhibit enhanced ATP hydrolysis rates that likely result from multiple preformed active sites within the oligomeric complex. Oligomerization is important for both enzyme activation and T3SS function. Activity is regulated by MxiN/SctL, which differentially regulates the activity of the monomer and the oligomer: it up-regulates the ATPase activity of the monomer, while it down-regulates the activity of the oligomer. In terms of biological role, ATPase component of the type III secretion system (T3SS), also called injectisome, which is used to inject bacterial effector proteins into eukaryotic host cells. Acts as a molecular motor to provide the energy that is required for the export of proteins. Required for type III secretion apparatus (T3SA) formation, proper protein secretion, host cell invasion and virulence. May play a critical role in T3SS substrate recognition, disassembly of the effector/chaperone complex and unfolding of the effector in an ATP-dependent manner prior to secretion. This is Type 3 secretion system ATPase from Shigella flexneri.